The chain runs to 66 residues: MASKIFFVLAVFLVMSAVLPESFAGCKNLNSHCYRQHRECCHGLVCRRPNYGNGRGILWKCVRAKK.

The signal sequence occupies residues 1 to 24 (MASKIFFVLAVFLVMSAVLPESFA). 3 disulfides stabilise this stretch: C26–C41, C33–C46, and C40–C61.

It localises to the secreted. It is found in the nematocyst. Its function is as follows. Alpha-toxins act on postsynaptic membranes, they bind to the nicotinic acetylcholine receptors (nAChR) and thus inhibit them. This toxin competes with alpha-bungarotoxin for binding to orthosteric sites on muscle-type T.carlifornicus (IC(50)=1080 nM) and human alpha-7/CHRNA7 nAChRs (IC(50)=14.13 uM). This chain is Alpha-actitoxin-Ms11a-2, found in Metridium senile (Brown sea anemone).